We begin with the raw amino-acid sequence, 1169 residues long: Integrin alpha-X (1169 aa).

Positions 1–19 (MSCTWIAFLLLLGFVSCLG) are cleaved as a signal peptide. Topologically, residues 20–1116 (FNLDAEKLTH…EMYKVHNPVP (1097 aa)) are extracellular. 2 FG-GAP repeats span residues 23 to 78 (DAEK…NCEP) and 79 to 138 (ISLQ…QSQN). Cysteine 69 and cysteine 76 are joined by a disulfide. A glycan (N-linked (GlcNAc...) asparagine) is linked at asparagine 89. Cystine bridges form between cysteine 108–cysteine 126 and cysteine 116–cysteine 146. A VWFA domain is found at 152–330 (DIVFLIDGSG…DALKDIENQL (179 aa)). Mg(2+)-binding residues include aspartate 158, serine 160, serine 162, and aspartate 260. A glycan (N-linked (GlcNAc...) asparagine) is linked at asparagine 267. 5 FG-GAP repeats span residues 341–392 (ETPS…PTFI), 393–444 (NMSQ…SRHW), 445–505 (RPKS…GSRW), 508–566 (GTTL…QDIA), and 571–631 (QRIS…FTPA). A glycan (N-linked (GlcNAc...) asparagine) is linked at asparagine 393. Residues aspartate 467, aspartate 469, aspartate 471, and aspartate 475 each coordinate Ca(2+). A disulfide bond links cysteine 496 and cysteine 507. Residues aspartate 531, asparagine 533, aspartate 535, aspartate 539, aspartate 594, aspartate 598, and aspartate 602 each contribute to the Ca(2+) site. 2 disulfides stabilise this stretch: cysteine 640-cysteine 721 and cysteine 656-cysteine 711. Asparagine 734 carries N-linked (GlcNAc...) asparagine glycosylation. Cystine bridges form between cysteine 770/cysteine 776 and cysteine 858/cysteine 873. An N-linked (GlcNAc...) asparagine glycan is attached at asparagine 949. 2 cysteine pairs are disulfide-bonded: cysteine 1007–cysteine 1031 and cysteine 1036–cysteine 1041. Residues asparagine 1059 and asparagine 1084 are each glycosylated (N-linked (GlcNAc...) asparagine). The helical transmembrane segment at 1117–1137 (LIVGSSVGGLLLLAIITAILY) threads the bilayer. At 1138–1169 (KAGFFKRQYKEMLEEANGQFVSDGTPTPQVAQ) the chain is on the cytoplasmic side. Positions 1140-1144 (GFFKR) match the GFFKR motif motif.

It belongs to the integrin alpha chain family. As to quaternary structure, heterodimer of an alpha and a beta subunit. Alpha-X associates with beta-2.

It is found in the membrane. Its function is as follows. Integrin alpha-X/beta-2 is a receptor for fibrinogen. It recognizes the sequence G-P-R in fibrinogen. It mediates cell-cell interaction during inflammatory responses. It is especially important in monocyte adhesion and chemotaxis. In Mus musculus (Mouse), this protein is Integrin alpha-X (Itgax).